A 515-amino-acid polypeptide reads, in one-letter code: Forkhead box protein H1 (515 aa).

Positions 55-103 are disordered; sequence YREGGTWSPDRGSMHGLSPGTQEGSCTQAEGTKDSLGGDETLSRKSKKK. The segment covering 73–84 has biased composition (polar residues); that stretch reads PGTQEGSCTQAE. Residues 110-206 constitute a DNA-binding region (fork-head); that stretch reads KPPYSYLAMI…MKLQNTALTR (97 aa). The segment at 307 to 399 is disordered; that stretch reads YPQSKPTRNG…EPPKKMPLLS (93 aa). Over residues 322–339 the composition is skewed to low complexity; sequence SASHSTYSSSSSSISTIS. Residues 375–388 are compositionally biased toward polar residues; the sequence is STPSSDTDAGNYSP. The interval 377-503 is SMAD-interaction domain (SID); the sequence is PSSDTDAGNY…PSFLGQCLGS (127 aa). The short motif at 402–406 is the Fast/FoxH1 motif 1 (FM1) element; the sequence is LPTSY. A Fast/FoxH1 motif 2 (FM2) motif is present at residues 412–418; sequence PNVVAPP. The SMAD-interaction motif (SIM) signature appears at 467–488; the sequence is LDNMLKTVPPNKSVFDVLTSHP.

In terms of assembly, ARF1 contains 2 smad2s, 1 smad4 and 1 foxh1/fast-1 protein. Interaction with smad4 is most likely indirect through interaction with the MH2 domain of smad2. Binds to the MH2 domain of smad3, which can incorporate into the ARF1 complex. The ARF1 and ARF2 complexes are activated by distinct TGF-beta family members; formation of ARF1 is promoted by activin. Interacts (via Fork-head domain) with gtf2ird1/wbscr11 (via repeats 4-5).

It is found in the nucleus. Functionally, transcriptional activator. Recognizes and binds to the DNA sequence 5'-TGT[GT][GT]ATT-3'. Upon TGF-beta induction, forms a transcriptionally active complex with smad2 and smad4 called activin-responsive factor 1 (ARF1), which binds a site on the mix-B/mix.2 promoter called the activin response element (ARE). Binds to activated smads and the ARE with much lower affinity than fast3. Necessary for the first steps in mesoderm specification, directly inducing mesodermal genes. Acts with fast3 to control the convergent extension movements of gastrulation. Binds to the proximal element (PE) of the gsc gene and cooperates with gtf2ird1/wbscr11 and SMAD proteins to regulate gsc transcription. This chain is Forkhead box protein H1, found in Xenopus tropicalis (Western clawed frog).